The following is a 409-amino-acid chain: Ligand-gated cation channel ZACN (409 aa).

The signal sequence occupies residues 1-18 (MAPRLLLLLLAFLRLGTT). Topologically, residues 19–233 (GPLVQGRGFR…LRLQNTALKA (215 aa)) are extracellular. Asn-55 and Asn-99 each carry an N-linked (GlcNAc...) asparagine glycan. A disulfide bridge connects residues Cys-157 and Cys-171. The helical transmembrane segment at 234–254 (IIALLVPGEALLLADMCGGLL) threads the bilayer. At 255 to 265 (PLRATERIAYK) the chain is on the cytoplasmic side. Residues 266 to 286 (VTLLLGYLVFHSSLVQALPSS) form a helical membrane-spanning segment. Topologically, residues 287–296 (SSCNPLLIYY) are extracellular. Residues 297–317 (FTVLLLLLFISTMETVLLAAL) traverse the membrane as a helical segment. At 318–365 (QARGHLSARSSPIPTPRGEQQDHGDLGPHPEEAPGVKESRSWAEAADH) the chain is on the cytoplasmic side. A disordered region spans residues 325 to 354 (ARSSPIPTPRGEQQDHGDLGPHPEEAPGVK). Residues 336-354 (EQQDHGDLGPHPEEAPGVK) show a composition bias toward basic and acidic residues. A helical membrane pass occupies residues 366–386 (IFFLVYVVGVVCSQFFFIGFW). Residues 387-409 (MWATCKSDPAPGEAIPHGGQPRL) are Extracellular-facing.

Belongs to the ligand-gated ion channel (TC 1.A.9) family. Post-translationally, glycosylated.

The protein resides in the cell membrane. The enzyme catalyses Na(+)(in) = Na(+)(out). It carries out the reaction K(+)(in) = K(+)(out). Ligand-gated cation channel that allows the movement of sodium and potassium monoatomic cations across cell membranes when activated by zinc (Zn2+), copper (Cu2+), and changes in pH. Could also transport cesium. The protein is Ligand-gated cation channel ZACN of Canis lupus familiaris (Dog).